We begin with the raw amino-acid sequence, 152 residues long: Protein-export protein SecB (152 aa).

The protein belongs to the SecB family. As to quaternary structure, homotetramer, a dimer of dimers. One homotetramer interacts with 1 SecA dimer.

The protein resides in the cytoplasm. Functionally, one of the proteins required for the normal export of preproteins out of the cell cytoplasm. It is a molecular chaperone that binds to a subset of precursor proteins, maintaining them in a translocation-competent state. It also specifically binds to its receptor SecA. The sequence is that of Protein-export protein SecB from Rickettsia typhi (strain ATCC VR-144 / Wilmington).